The chain runs to 519 residues: MANNIKTKITRFGYIVNKNLIDDETIKEIKSDLTVVPFKINNYAPKYIKNEGFPLYVENGNYIGIPKYYGFDKLGEPDIDKVSNYEYPVQDMTYTGTLRPHQQMVSDKIIKGMEEGGGGVLVMGCGSGKTNVAIYIACKFKLRTLFVVHKTFLRDQVIDRIKSNTNVKKVGIIQRKIVNYKHPFVVSMVQSLAKINYNDEIFKDFGMIIIDEVHHMGARNFSTVYQKISSKYMLGISAEYTRTDGMYKIINWYMGPILHLEEQKPNEMVIVKQFYYSTSNKERIKMKYINGDTNKPNRSKMITNLFYIKRRNRFILYLIQELFDMGKNILFLSGRLKQIDLLYELLNNDEFTHGNVGKYIGGMKESSLKKSAMKQIILGSYDMASEGLDIEGLNVVILGTPKTSIKQSVGRILRKEVYEEHPIVIDIVDVDNDTFKKQSKSRNNYFQKQKYNIQKYYISESLKQKYELWNDKEYIKKVLVEIPEIPDKQTQDMIKTNPNPKKKYQGPINIDELNFLEDD.

The 149-residue stretch at 110 to 258 (IKGMEEGGGG…IINWYMGPIL (149 aa)) folds into the Helicase ATP-binding domain. 123–130 (MGCGSGKT) contacts ATP. The DEAH box motif lies at 211–214 (DEVH). The Helicase C-terminal domain maps to 317 to 457 (YLIQELFDMG…KQKYNIQKYY (141 aa)).

The protein belongs to the DEAD box helicase family. DEAH subfamily.

It carries out the reaction ATP + H2O = ADP + phosphate + H(+). This is Putative ATP-dependent RNA helicase L396 from Acanthamoeba polyphaga (Amoeba).